A 796-amino-acid polypeptide reads, in one-letter code: Protein translocase subunit SecA 2 (796 aa).

ATP contacts are provided by residues Gln84, 102–106 (GEGKT), and Asp496.

It belongs to the SecA family. Monomer and homodimer. Part of the essential Sec protein translocation apparatus which comprises SecA, SecYEG and auxiliary proteins SecDF. Other proteins may also be involved.

It localises to the cell membrane. The protein localises to the cytoplasm. It catalyses the reaction ATP + H2O + cellular proteinSide 1 = ADP + phosphate + cellular proteinSide 2.. Functionally, part of the Sec protein translocase complex. Interacts with the SecYEG preprotein conducting channel. Has a central role in coupling the hydrolysis of ATP to the transfer of proteins into and across the cell membrane, serving as an ATP-driven molecular motor driving the stepwise translocation of polypeptide chains across the membrane. The polypeptide is Protein translocase subunit SecA 2 (Staphylococcus aureus (strain MSSA476)).